Consider the following 155-residue polypeptide: Small ribosomal subunit protein uS7 (155 aa).

It belongs to the universal ribosomal protein uS7 family. As to quaternary structure, part of the 30S ribosomal subunit. Contacts proteins S9 and S11.

Functionally, one of the primary rRNA binding proteins, it binds directly to 16S rRNA where it nucleates assembly of the head domain of the 30S subunit. Is located at the subunit interface close to the decoding center, probably blocks exit of the E-site tRNA. This is Small ribosomal subunit protein uS7 from Mycoplasma genitalium (strain ATCC 33530 / DSM 19775 / NCTC 10195 / G37) (Mycoplasmoides genitalium).